The sequence spans 281 residues: Leukocyte antigen CD37 (281 aa).

Over 1-17 (MSAQESCLSLIKYFLFV) the chain is Cytoplasmic. The helical transmembrane segment at 18 to 38 (FNLFFFVLGGLIFCFGTWILI) threads the bilayer. Topologically, residues 39–59 (DKTSFVSFVGLSFVPLQTWSK) are extracellular. Residues 60–74 (VLSVSGVLTMALALL) form a helical membrane-spanning segment. At 75 to 85 (GCVGALKELRC) the chain is on the cytoplasmic side. The helical transmembrane segment at 86 to 111 (LLGLYFGMLLLLFATQITLGILISTQ) threads the bilayer. At 112 to 241 (RVRLERRVQE…RSLQKWLHNN (130 aa)) the chain is on the extracellular side. Residues Asn-170, Asn-183, and Asn-188 are each glycosylated (N-linked (GlcNAc...) asparagine). A helical transmembrane segment spans residues 242 to 266 (IISIVGICLGVGLLELGFMTLSIFL). The Cytoplasmic segment spans residues 267-281 (CRNLDHVYDRLARYR).

The protein belongs to the tetraspanin (TM4SF) family. In terms of assembly, interacts with SCIMP. Interacts with SOCS3. Interacts with DECTIN1/CLEC7A. In terms of processing, tyrosine phosphorylated; leading to activation of downstream signaling pathways. As to expression, B-lymphocytes.

It is found in the cell membrane. Functionally, structural component of specialized membrane microdomains known as tetraspanin-enriched microdomains (TERMs), which act as platforms for receptor clustering and signaling. Participates thereby in diverse biological functions such as cell signal transduction, adhesion, migration and protein trafficking. Upon ligand binding, two signaling pathways are activated, one acting through phosphorylation by LYN leading to cell death or a survival pathway with activation of GSK3B. Plays an essential role essential for clustering of integrin ITGA4/ITGB1 and promotes its mobility in the plasma membrane of B-cells. In turn, participates in ITGA4/ITGB1 integrin-mediated antiapoptotic signaling through AKT. Plays also a role in the migration of dendritic cells and neutrophils to draining lymph nodes, as well as in their integrin-mediated adhesion. Negatively regulates IL-6 responses through direct interaction with SOCS3 thereby preventing constitutive IL-6 signaling. Alternatively, inhibition of IL-6 signaling can also occur via interaction and stabilization of DECTIN1/CLEC7A at the cell membrane to inhibit its ability to promote the production of IL-6. The polypeptide is Leukocyte antigen CD37 (Cd37) (Rattus norvegicus (Rat)).